A 714-amino-acid chain; its full sequence is P-loop NTPase domain-containing protein LPA1 (714 aa).

Over residues 1 to 11 (MPMPPQCASSK) the composition is skewed to low complexity. Disordered stretches follow at residues 1-42 (MPMP…PPPK), 259-293 (QKLD…PRTE), and 595-689 (FGSE…GSGN). Basic and acidic residues predominate over residues 271–285 (EGRDDTSDDKAHHGS). The segment covering 595 to 617 (FGSEEDADDPPDAGTDEDLTDEE) has biased composition (acidic residues). Residues 618–636 (RDMHEIEAGSVDEHSTKSD) show a composition bias toward basic and acidic residues. A compositionally biased stretch (polar residues) spans 659 to 670 (AASSTKNSSNQE).

As to expression, expressed in roots, leaf blade shoots, leaf sheath shoots and panicles.

Required for the accumulation of phytic acid in seeds. Phytic acid is the primary storage form of phosphorus in cereal grains and other plant seeds. In Oryza sativa subsp. japonica (Rice), this protein is P-loop NTPase domain-containing protein LPA1.